The following is a 142-amino-acid chain: Hemoglobin subunit alpha (142 aa).

S1 carries the post-translational modification N-acetylserine. Residues 1–142 (SLSDKDKAAV…VALALAERYR (142 aa)) enclose the Globin domain. Residue H59 coordinates O2. Position 88 (H88) interacts with heme b.

This sequence belongs to the globin family. As to quaternary structure, hb1 is a heterotetramer of two alpha chains and two beta chains. HbC is a heterotetramer of two alpha chains and two beta-C chains. As to expression, red blood cells.

Its function is as follows. Involved in oxygen transport from gills to the various peripheral tissues. The polypeptide is Hemoglobin subunit alpha (hba) (Trematomus bernacchii (Emerald rockcod)).